The sequence spans 382 residues: Alpha-methylacyl-CoA racemase (382 aa).

Substrate-binding positions include Arg-36 and 55-58 (LDLK). At Lys-58 the chain carries N6-acetyllysine. The residue at position 87 (Lys-87) is an N6-acetyllysine; alternate. Position 87 is an N6-succinyllysine; alternate (Lys-87). Residue 121 to 126 (GHDINY) coordinates substrate. The active-site Proton acceptor is the His-122. Asp-152 serves as the catalytic Proton donor. Lys-268 is modified (N6-succinyllysine). A Microbody targeting signal motif is present at residues 380–382 (ASL).

This sequence belongs to the CoA-transferase III family. As to quaternary structure, monomer.

The protein localises to the peroxisome. Its subcellular location is the mitochondrion. The catalysed reaction is a (2S)-2-methylacyl-CoA = a (2R)-2-methylacyl-CoA. It carries out the reaction (25R)-3alpha,7alpha,12alpha-trihydroxy-5beta-cholestan-26-oyl-CoA = (25S)-3alpha,7alpha,12alpha-trihydroxy-5beta-cholestan-26-oyl-CoA. The enzyme catalyses (2R,6)-dimethylheptanoyl-CoA = (2S,6)-dimethylheptanoyl-CoA. Its pathway is lipid metabolism; bile acid biosynthesis. It functions in the pathway lipid metabolism; fatty acid metabolism. Functionally, catalyzes the interconversion of (R)- and (S)-stereoisomers of alpha-methyl-branched-chain fatty acyl-CoA esters. Acts only on coenzyme A thioesters, not on free fatty acids, and accepts as substrates a wide range of alpha-methylacyl-CoAs, including pristanoyl-CoA, trihydroxycoprostanoyl-CoA (an intermediate in bile acid synthesis), and arylpropionic acids like the anti-inflammatory drug ibuprofen (2-(4-isobutylphenyl)propionic acid) but neither 3-methyl-branched nor linear-chain acyl-CoAs. The chain is Alpha-methylacyl-CoA racemase (AMACR) from Homo sapiens (Human).